Reading from the N-terminus, the 398-residue chain is MNIYEYQAMALLNERGVSVVPGYMAANVEEAVKAAEQLSSPPYVIKSQILAGGRGKGYFRESPKEGGGVRLVSDIAAVKKQAESMLGRHLVTAQTDDQGIPVEKLLITEAVSIAREFYLSLLVDRQTGRVTFVASPEGGMDIETVAKEKPEAIHRIAIDPATGFQPHHGRMIGFALGLSGDVFKQGIKLAASLYKAFTTSDMSLLEINPLVETNDGKLLPVDAKISFDDNALFRHPDIAALGEAGASDPLEQEARQAGLSYIKLDGSIGCMVNGAGLAMGTMDIIQLHGEMPANFLDVGGGASKEKVAAAFRIILSDPSVKGILVNIFGGIMRCDILAEGIIAAARELDITVPLVVRLEGNNVNEGKAALVSSGLPIITASDLGDAAQKIVAAIRQTA.

Positions Met9 to Glu253 constitute an ATP-grasp domain. ATP-binding positions include Lys46, Gly53–Gly55, Val111, and Glu116. Positions 208 and 222 each coordinate Mg(2+). Substrate-binding positions include Asn273 and Gly330–Met332.

This sequence belongs to the succinate/malate CoA ligase beta subunit family. As to quaternary structure, heterotetramer of two alpha and two beta subunits. Mg(2+) serves as cofactor.

It carries out the reaction succinate + ATP + CoA = succinyl-CoA + ADP + phosphate. It catalyses the reaction GTP + succinate + CoA = succinyl-CoA + GDP + phosphate. It functions in the pathway carbohydrate metabolism; tricarboxylic acid cycle; succinate from succinyl-CoA (ligase route): step 1/1. Succinyl-CoA synthetase functions in the citric acid cycle (TCA), coupling the hydrolysis of succinyl-CoA to the synthesis of either ATP or GTP and thus represents the only step of substrate-level phosphorylation in the TCA. The beta subunit provides nucleotide specificity of the enzyme and binds the substrate succinate, while the binding sites for coenzyme A and phosphate are found in the alpha subunit. This is Succinate--CoA ligase [ADP-forming] subunit beta from Zymomonas mobilis subsp. mobilis (strain ATCC 31821 / ZM4 / CP4).